The following is a 230-amino-acid chain: Large ribosomal subunit protein uL1c (230 aa).

It belongs to the universal ribosomal protein uL1 family. In terms of assembly, part of the 50S ribosomal subunit.

The protein localises to the plastid. The protein resides in the chloroplast. Its function is as follows. Binds directly to 23S rRNA. Might be involved in E site tRNA release (Potential). The sequence is that of Large ribosomal subunit protein uL1c (rpl1) from Trieres chinensis (Marine centric diatom).